We begin with the raw amino-acid sequence, 156 residues long: Endoribonuclease YbeY (156 aa).

Residues His115, His119, and His125 each coordinate Zn(2+).

This sequence belongs to the endoribonuclease YbeY family. Requires Zn(2+) as cofactor.

It is found in the cytoplasm. Single strand-specific metallo-endoribonuclease involved in late-stage 70S ribosome quality control and in maturation of the 3' terminus of the 16S rRNA. In Actinobacillus succinogenes (strain ATCC 55618 / DSM 22257 / CCUG 43843 / 130Z), this protein is Endoribonuclease YbeY.